Reading from the N-terminus, the 135-residue chain is UPF0102 protein Aave_0630 (135 aa).

The tract at residues 1–21 is disordered; that stretch reads MGILEKKTAGPGGAARKTTTR.

This sequence belongs to the UPF0102 family.

This Paracidovorax citrulli (strain AAC00-1) (Acidovorax citrulli) protein is UPF0102 protein Aave_0630.